A 429-amino-acid chain; its full sequence is Glutamate-1-semialdehyde 2,1-aminomutase 2 (429 aa).

K268 carries the post-translational modification N6-(pyridoxal phosphate)lysine.

It belongs to the class-III pyridoxal-phosphate-dependent aminotransferase family. HemL subfamily. Homodimer. Pyridoxal 5'-phosphate serves as cofactor.

Its subcellular location is the cytoplasm. The catalysed reaction is (S)-4-amino-5-oxopentanoate = 5-aminolevulinate. It functions in the pathway porphyrin-containing compound metabolism; protoporphyrin-IX biosynthesis; 5-aminolevulinate from L-glutamyl-tRNA(Glu): step 2/2. The polypeptide is Glutamate-1-semialdehyde 2,1-aminomutase 2 (Geobacillus thermodenitrificans (strain NG80-2)).